The following is a 629-amino-acid chain: 1-deoxy-D-xylulose-5-phosphate synthase (629 aa).

Residues His79 and 119–121 (SHA) contribute to the thiamine diphosphate site. Asp150 serves as a coordination point for Mg(2+). Residues 151-152 (GS), Asn180, Tyr292, and Glu377 contribute to the thiamine diphosphate site. Position 180 (Asn180) interacts with Mg(2+).

The protein belongs to the transketolase family. DXPS subfamily. Homodimer. It depends on Mg(2+) as a cofactor. Thiamine diphosphate is required as a cofactor.

It catalyses the reaction D-glyceraldehyde 3-phosphate + pyruvate + H(+) = 1-deoxy-D-xylulose 5-phosphate + CO2. It participates in metabolic intermediate biosynthesis; 1-deoxy-D-xylulose 5-phosphate biosynthesis; 1-deoxy-D-xylulose 5-phosphate from D-glyceraldehyde 3-phosphate and pyruvate: step 1/1. Functionally, catalyzes the acyloin condensation reaction between C atoms 2 and 3 of pyruvate and glyceraldehyde 3-phosphate to yield 1-deoxy-D-xylulose-5-phosphate (DXP). This is 1-deoxy-D-xylulose-5-phosphate synthase from Tropheryma whipplei (strain TW08/27) (Whipple's bacillus).